Consider the following 275-residue polypeptide: NADPH-dependent 7-cyano-7-deazaguanine reductase (275 aa).

81 to 83 (VES) is a substrate binding site. 83–84 (SK) is a binding site for NADPH. The active-site Thioimide intermediate is Cys-182. The Proton donor role is filled by Asp-189. Residue 221–222 (HE) participates in substrate binding. NADPH is bound at residue 250–251 (RG).

It belongs to the GTP cyclohydrolase I family. QueF type 2 subfamily. As to quaternary structure, homodimer.

It is found in the cytoplasm. The enzyme catalyses 7-aminomethyl-7-carbaguanine + 2 NADP(+) = 7-cyano-7-deazaguanine + 2 NADPH + 3 H(+). It participates in tRNA modification; tRNA-queuosine biosynthesis. In terms of biological role, catalyzes the NADPH-dependent reduction of 7-cyano-7-deazaguanine (preQ0) to 7-aminomethyl-7-deazaguanine (preQ1). The sequence is that of NADPH-dependent 7-cyano-7-deazaguanine reductase from Polaromonas sp. (strain JS666 / ATCC BAA-500).